The chain runs to 236 residues: L-aspartate dehydrogenase (236 aa).

NAD(+) contacts are provided by residues 10-11, Asp31, 58-59, Tyr66, 80-81, Ala111, and Asn162; these read AI, AS, and LS. His189 is an active-site residue. 212-215 contributes to the NAD(+) binding site; sequence NPKT.

The protein belongs to the L-aspartate dehydrogenase family. Homodimer.

The enzyme catalyses L-aspartate + NADP(+) + H2O = oxaloacetate + NH4(+) + NADPH + H(+). The catalysed reaction is L-aspartate + NAD(+) + H2O = oxaloacetate + NH4(+) + NADH + H(+). The protein operates within cofactor biosynthesis; NAD(+) biosynthesis; iminoaspartate from L-aspartate (dehydrogenase route): step 1/1. Functionally, specifically catalyzes the NAD or NADP-dependent dehydrogenation of L-aspartate to iminoaspartate. In Archaeoglobus fulgidus (strain ATCC 49558 / DSM 4304 / JCM 9628 / NBRC 100126 / VC-16), this protein is L-aspartate dehydrogenase.